Here is a 197-residue protein sequence, read N- to C-terminus: Holliday junction branch migration complex subunit RuvA (197 aa).

Residues 1-64 (MYEYIKGKYI…EDFIGVYGFL (64 aa)) form a domain I region. Positions 65–144 (TKDELSMFKL…DILEEDDEQI (80 aa)) are domain II. The segment at 145–149 (INKVT) is flexible linker. The segment at 149 to 197 (TDDKKVLEAVAALVTLGYSEKEANKVINSCDKNNSLEQIIKEALKYLMK) is domain III.

This sequence belongs to the RuvA family. In terms of assembly, homotetramer. Forms an RuvA(8)-RuvB(12)-Holliday junction (HJ) complex. HJ DNA is sandwiched between 2 RuvA tetramers; dsDNA enters through RuvA and exits via RuvB. An RuvB hexamer assembles on each DNA strand where it exits the tetramer. Each RuvB hexamer is contacted by two RuvA subunits (via domain III) on 2 adjacent RuvB subunits; this complex drives branch migration. In the full resolvosome a probable DNA-RuvA(4)-RuvB(12)-RuvC(2) complex forms which resolves the HJ.

Its subcellular location is the cytoplasm. Functionally, the RuvA-RuvB-RuvC complex processes Holliday junction (HJ) DNA during genetic recombination and DNA repair, while the RuvA-RuvB complex plays an important role in the rescue of blocked DNA replication forks via replication fork reversal (RFR). RuvA specifically binds to HJ cruciform DNA, conferring on it an open structure. The RuvB hexamer acts as an ATP-dependent pump, pulling dsDNA into and through the RuvAB complex. HJ branch migration allows RuvC to scan DNA until it finds its consensus sequence, where it cleaves and resolves the cruciform DNA. The sequence is that of Holliday junction branch migration complex subunit RuvA from Clostridium botulinum (strain Kyoto / Type A2).